The sequence spans 201 residues: MTKVLVLYYSMYGHVETMAKAIAEGAGSVEGVEVTIKRVPELMTDEQAKKAGVKLDQSAPIATPSELADYDAIIFGTPTRFGNMCAQMRNFLDQTGGLWAGGKLINKVGSVFTSTGTQHGGQETTITSFHTNLFHYGMIVVGVPYSCQEMTNMNEITGGTPYGASTLAGGDGSRQPSENEIKIAKCQGVHVAKVAKKQSAS.

Residues 4–191 (VLVLYYSMYG…KIAKCQGVHV (188 aa)) enclose the Flavodoxin-like domain. FMN-binding positions include 10 to 15 (SMYGHV) and 79 to 81 (TRF). Tyr12 is an NAD(+) binding site. A substrate-binding site is contributed by Trp99. Residues 114-120 (STGTQHG) and His135 each bind FMN.

The protein belongs to the WrbA family. Requires FMN as cofactor.

The catalysed reaction is a quinone + NADH + H(+) = a quinol + NAD(+). The enzyme catalyses a quinone + NADPH + H(+) = a quinol + NADP(+). The sequence is that of NAD(P)H dehydrogenase (quinone) from Hydrogenovibrio crunogenus (strain DSM 25203 / XCL-2) (Thiomicrospira crunogena).